The primary structure comprises 722 residues: Transcription factor kayak, isoforms D/sro (722 aa).

The span at 173-188 shows a compositional bias: low complexity; that stretch reads QHQTQQQHQSQQQQQH. Disordered regions lie at residues 173–193, 283–317, and 350–407; these read QHQT…RQDY, LGQG…HTDS, and GSAS…KRRV. The segment covering 283-300 has biased composition (polar residues); it reads LGQGSESEDSNASYNDTQ. Low complexity-rich tracts occupy residues 308 to 317 and 350 to 364; these read TDTSSAHTDS and GSAS…TSNT. The region spanning 385 to 448 is the bZIP domain; sequence EQKRAVRRER…NQLEYLLATH (64 aa). A basic motif region spans residues 387 to 406; the sequence is KRAVRRERNKQAAARCRKRR. Residues 413-420 are leucine-zipper; sequence LTEEVEQL. The span at 477–498 shows a compositional bias: low complexity; that stretch reads AGSSGSGASSHHNHNSNDSSNG. Disordered regions lie at residues 477–519 and 683–722; these read AGSS…PLDL and DGGT…LVSL. Polar residues predominate over residues 506-516; the sequence is TLNSTGRSNSP. Ser515 carries the phosphoserine modification.

This sequence belongs to the bZIP family. Fos subfamily. In terms of assembly, homodimer. Heterodimer with Jra. The kay-Jra heterodimer binds more stably to the AP-1 site than either of the two proteins alone.

The protein localises to the nucleus. In terms of biological role, developmentally regulated transcription factor AP-1 binds and recognizes the enhancer DNA sequence: 5'-TGA[CG]TCA-3'. May play a role in the function or determination of a particular subset of cells in the developing embryo. It is able to carry out its function either independently of or in conjunction with Jra. This Drosophila melanogaster (Fruit fly) protein is Transcription factor kayak, isoforms D/sro.